The primary structure comprises 589 residues: Protein NRT1/ PTR FAMILY 7.2 (589 aa).

The next 2 membrane-spanning stretches (helical) occupy residues 32-52 (WLTA…FFGV) and 78-98 (WTGT…SYWG). Position 102 is a phosphothreonine (threonine 102). The next 10 membrane-spanning stretches (helical) occupy residues 105–125 (IFQA…GALL), 147–167 (VLFY…QPNI), 187–207 (IAFF…SNTV), 217–237 (WPLG…LFLI), 343–363 (IWLC…LFVV), 377–397 (IPAS…IFAY), 423–443 (MGIG…VEIH), 464–484 (IFWQ…MYVG), 504–524 (LCMA…SIVM), and 548–568 (FYFL…ICAK).

The protein belongs to the major facilitator superfamily. Proton-dependent oligopeptide transporter (POT/PTR) (TC 2.A.17) family. In terms of tissue distribution, expressed in xylem parenchyma cells within the vasculature. Expressed in siliques and flowers. Higher expression in shoots than in roots.

It is found in the cell membrane. Low-affinity nitrate transporter. Involved in nitrate removal from xylem sap. Not involved in oligopeptides transport. The polypeptide is Protein NRT1/ PTR FAMILY 7.2 (NPF7.2) (Arabidopsis thaliana (Mouse-ear cress)).